The primary structure comprises 606 residues: Double-stranded RNA-binding protein Staufen homolog 2 (606 aa).

2 consecutive DRBM domains span residues 8-75 (TPMC…ESSL) and 95-181 (TPTV…ALKN). 2 disordered regions span residues 57-97 (SIKK…ITPT) and 177-205 (QALK…SDAS). The segment covering 85-97 (ADSNSNPGSITPT) has biased composition (polar residues). A compositionally biased stretch (basic and acidic residues) spans 192-205 (SEEKKETEENSDAS). 3 consecutive DRBM domains span residues 207-274 (SEIS…ELKK), 307-375 (NPIS…QLGY), and 493-557 (QPSQ…QLSE). Residues 580–606 (RLAERTESKPTNSGTTAQDCKDSKAVV) form a disordered region. Positions 588 to 597 (KPTNSGTTAQ) are enriched in polar residues.

Functionally, RNA-binding protein required for the microtubule-dependent transport of RNAs within polarized cell types. In Danio rerio (Zebrafish), this protein is Double-stranded RNA-binding protein Staufen homolog 2 (stau2).